The primary structure comprises 273 residues: NADPH-dependent 7-cyano-7-deazaguanine reductase (273 aa).

Residue 81–83 coordinates substrate; that stretch reads VES. 83-84 is an NADPH binding site; that stretch reads SK. Residue Cys-179 is the Thioimide intermediate of the active site. The active-site Proton donor is the Asp-186. Residue 218-219 coordinates substrate; sequence AE. Residue 247–248 coordinates NADPH; it reads RG.

This sequence belongs to the GTP cyclohydrolase I family. QueF type 2 subfamily. In terms of assembly, homodimer.

The protein resides in the cytoplasm. The enzyme catalyses 7-aminomethyl-7-carbaguanine + 2 NADP(+) = 7-cyano-7-deazaguanine + 2 NADPH + 3 H(+). It functions in the pathway tRNA modification; tRNA-queuosine biosynthesis. Its function is as follows. Catalyzes the NADPH-dependent reduction of 7-cyano-7-deazaguanine (preQ0) to 7-aminomethyl-7-deazaguanine (preQ1). The sequence is that of NADPH-dependent 7-cyano-7-deazaguanine reductase from Rickettsia prowazekii (strain Madrid E).